Here is a 244-residue protein sequence, read N- to C-terminus: uncharacterized protein (244 aa).

6 helical membrane-spanning segments follow: residues 21 to 41 (FPYSVPMIAGFLFLGIAYGIY), 44 to 64 (ALGFGFLYPTLMALLIYAGSV), 66 to 86 (FIAAGALIAPFSPISVLLITL), 139 to 159 (WYMFFVSLYLHIYWVLGAAMG), 165 to 185 (VLPFNLKGVEFSMTALFLVIF), and 199 to 219 (LLGLGIALVFLLIIGKEYFLI).

The protein belongs to the AzlC family.

The protein localises to the cell membrane. This is an uncharacterized protein from Haemophilus influenzae (strain ATCC 51907 / DSM 11121 / KW20 / Rd).